The chain runs to 357 residues: Heme A synthase (357 aa).

The next 5 membrane-spanning stretches (helical) occupy residues 24-44, 110-130, 140-160, 175-195, and 209-229; these read LVRY…MVGG, MLAR…WVTG, MLGL…MVAS, IHLT…RGLV, and FAGW…LVAG. His-272 is a heme binding site. A run of 3 helical transmembrane segments spans residues 274 to 294, 303 to 323, and 325 to 345; these read MFAY…WKQV, TIVL…TLLM, and VPLH…AFAV. His-333 is a heme binding site.

It belongs to the COX15/CtaA family. Type 2 subfamily. As to quaternary structure, interacts with CtaB. Heme b is required as a cofactor.

It localises to the cell membrane. It carries out the reaction Fe(II)-heme o + 2 A + H2O = Fe(II)-heme a + 2 AH2. The protein operates within porphyrin-containing compound metabolism; heme A biosynthesis; heme A from heme O: step 1/1. Catalyzes the conversion of heme O to heme A by two successive hydroxylations of the methyl group at C8. The first hydroxylation forms heme I, the second hydroxylation results in an unstable dihydroxymethyl group, which spontaneously dehydrates, resulting in the formyl group of heme A. This is Heme A synthase from Brucella anthropi (strain ATCC 49188 / DSM 6882 / CCUG 24695 / JCM 21032 / LMG 3331 / NBRC 15819 / NCTC 12168 / Alc 37) (Ochrobactrum anthropi).